A 243-amino-acid polypeptide reads, in one-letter code: DNA repair protein RecO (243 aa).

The protein belongs to the RecO family.

Functionally, involved in DNA repair and RecF pathway recombination. The sequence is that of DNA repair protein RecO from Bartonella quintana (strain Toulouse) (Rochalimaea quintana).